The primary structure comprises 314 residues: DNA-directed RNA polymerase subunit alpha (314 aa).

An alpha N-terminal domain (alpha-NTD) region spans residues 1–228 (MIEIEKPVIE…EHLNIFVGLT (228 aa)). The interval 245-314 (KEKVLEMTIE…ELGLGLRKEE (70 aa)) is alpha C-terminal domain (alpha-CTD).

The protein belongs to the RNA polymerase alpha chain family. Homodimer. The RNAP catalytic core consists of 2 alpha, 1 beta, 1 beta' and 1 omega subunit. When a sigma factor is associated with the core the holoenzyme is formed, which can initiate transcription.

It carries out the reaction RNA(n) + a ribonucleoside 5'-triphosphate = RNA(n+1) + diphosphate. DNA-dependent RNA polymerase catalyzes the transcription of DNA into RNA using the four ribonucleoside triphosphates as substrates. The polypeptide is DNA-directed RNA polymerase subunit alpha (Halalkalibacterium halodurans (strain ATCC BAA-125 / DSM 18197 / FERM 7344 / JCM 9153 / C-125) (Bacillus halodurans)).